The sequence spans 161 residues: Transcriptional repressor NrdR (161 aa).

The segment at 3 to 34 (CPSCQHTDSRVLESRAADSGKSVRRRRECLNC) is a zinc-finger region. The 91-residue stretch at 49 to 139 (ITVVKRSGTR…VYGKFSGISD (91 aa)) folds into the ATP-cone domain.

The protein belongs to the NrdR family. Zn(2+) serves as cofactor.

Functionally, negatively regulates transcription of bacterial ribonucleotide reductase nrd genes and operons by binding to NrdR-boxes. This chain is Transcriptional repressor NrdR, found in Synechococcus sp. (strain RCC307).